Reading from the N-terminus, the 291-residue chain is Ribosomal RNA small subunit methyltransferase H (291 aa).

S-adenosyl-L-methionine-binding positions include 31–33, Asp50, Phe77, Asp98, and Gln105; that span reads GGH.

The protein belongs to the methyltransferase superfamily. RsmH family.

The protein resides in the cytoplasm. It carries out the reaction cytidine(1402) in 16S rRNA + S-adenosyl-L-methionine = N(4)-methylcytidine(1402) in 16S rRNA + S-adenosyl-L-homocysteine + H(+). Its function is as follows. Specifically methylates the N4 position of cytidine in position 1402 (C1402) of 16S rRNA. This is Ribosomal RNA small subunit methyltransferase H from Endomicrobium trichonymphae.